Consider the following 521-residue polypeptide: Bifunctional purine biosynthesis protein PurH (521 aa).

An MGS-like domain is found at 1-145 (MIKQALISVS…KNHRDVTVVV (145 aa)).

This sequence belongs to the PurH family.

The enzyme catalyses (6R)-10-formyltetrahydrofolate + 5-amino-1-(5-phospho-beta-D-ribosyl)imidazole-4-carboxamide = 5-formamido-1-(5-phospho-D-ribosyl)imidazole-4-carboxamide + (6S)-5,6,7,8-tetrahydrofolate. It catalyses the reaction IMP + H2O = 5-formamido-1-(5-phospho-D-ribosyl)imidazole-4-carboxamide. Its pathway is purine metabolism; IMP biosynthesis via de novo pathway; 5-formamido-1-(5-phospho-D-ribosyl)imidazole-4-carboxamide from 5-amino-1-(5-phospho-D-ribosyl)imidazole-4-carboxamide (10-formyl THF route): step 1/1. It participates in purine metabolism; IMP biosynthesis via de novo pathway; IMP from 5-formamido-1-(5-phospho-D-ribosyl)imidazole-4-carboxamide: step 1/1. The chain is Bifunctional purine biosynthesis protein PurH from Burkholderia orbicola (strain AU 1054).